A 301-amino-acid polypeptide reads, in one-letter code: Nucleotide-binding protein MAB_2783c (301 aa).

Position 24–31 (24–31 (GLSGAGRG)) interacts with ATP. Residue 75 to 78 (DVRS) participates in GTP binding.

This sequence belongs to the RapZ-like family.

Displays ATPase and GTPase activities. The polypeptide is Nucleotide-binding protein MAB_2783c (Mycobacteroides abscessus (strain ATCC 19977 / DSM 44196 / CCUG 20993 / CIP 104536 / JCM 13569 / NCTC 13031 / TMC 1543 / L948) (Mycobacterium abscessus)).